The chain runs to 531 residues: RCC1 and BTB domain-containing protein 1 (531 aa).

RCC1 repeat units follow at residues 40–91, 93–145, 147–198, 199–250, 252–302, and 304–356; these read NDEV…LLST, DGVV…ALAA, GEVF…AVLD, NGEV…ALTD, GLLY…AAKT, and GGHV…FLTV. 2 BTB domains span residues 370–437 and 470–499; these read ADLK…DLPP and ENAF…INHL.

In terms of tissue distribution, ubiquitously expressed. In the retina, present in the nerve fiber layer and to a lesser extent in the inner and outer plexiform layers (at protein level).

It is found in the nucleus. May be involved in cell cycle regulation by chromatin remodeling. The chain is RCC1 and BTB domain-containing protein 1 (RCBTB1) from Homo sapiens (Human).